The chain runs to 696 residues: Glutamate-rich protein 6B (696 aa).

Residues 1–10 (MSAENNQLSG) show a composition bias toward polar residues. Residues 1–105 (MSAENNQLSG…EYLEKAGYLE (105 aa)) form a disordered region. Acidic residues-rich tracts occupy residues 32 to 44 (EDTE…ESLQ) and 54 to 72 (ESLE…EEEE). Residues 73 to 91 (YLGKEEYLKEEEYLGKEEH) show a composition bias toward basic and acidic residues.

It belongs to the ERICH6 family.

The chain is Glutamate-rich protein 6B (ERICH6B) from Homo sapiens (Human).